The primary structure comprises 183 residues: MKLIGITGMPGSGKSAITKLAEKYKIIVVSMGDVVRYETSKQGLRLNPENVGNTAVKLREIHGKEAIAVPCLNYVNEKYKCEDFVIIEGIRSIYEVNYLKKHAELDVIAIHSSPKTRFERLSGRNREDDSNDWNTFVERDERELNFSIGSVISLADYMVVNEGNYMDFMNDLENTFKKVINVI.

8–15 (GMPGSGKS) is a binding site for ATP.

Belongs to the UPF0200 family.

The sequence is that of UPF0200 protein MmarC6_1392 from Methanococcus maripaludis (strain C6 / ATCC BAA-1332).